Consider the following 270-residue polypeptide: Putative phosphoenolpyruvate synthase regulatory protein (270 aa).

ADP is bound at residue 150-157 (GVSRCGKT).

This sequence belongs to the pyruvate, phosphate/water dikinase regulatory protein family. PSRP subfamily.

It carries out the reaction [pyruvate, water dikinase] + ADP = [pyruvate, water dikinase]-phosphate + AMP + H(+). The catalysed reaction is [pyruvate, water dikinase]-phosphate + phosphate + H(+) = [pyruvate, water dikinase] + diphosphate. Its function is as follows. Bifunctional serine/threonine kinase and phosphorylase involved in the regulation of the phosphoenolpyruvate synthase (PEPS) by catalyzing its phosphorylation/dephosphorylation. This is Putative phosphoenolpyruvate synthase regulatory protein from Shewanella pealeana (strain ATCC 700345 / ANG-SQ1).